A 449-amino-acid chain; its full sequence is Tubulin alpha-2 chain (449 aa).

Position 11 (Q11) interacts with GTP. K40 carries the N6-acetyllysine modification. GTP-binding residues include E71, S140, G144, T145, T179, N206, and N228. E71 contributes to the Mg(2+) binding site. The active site involves E254.

It belongs to the tubulin family. Dimer of alpha and beta chains. A typical microtubule is a hollow water-filled tube with an outer diameter of 25 nm and an inner diameter of 15 nM. Alpha-beta heterodimers associate head-to-tail to form protofilaments running lengthwise along the microtubule wall with the beta-tubulin subunit facing the microtubule plus end conferring a structural polarity. Microtubules usually have 13 protofilaments but different protofilament numbers can be found in some organisms and specialized cells. Mg(2+) serves as cofactor. Undergoes a tyrosination/detyrosination cycle, the cyclic removal and re-addition of a C-terminal tyrosine residue by the enzymes tubulin tyrosine carboxypeptidase (TTCP) and tubulin tyrosine ligase (TTL), respectively. Post-translationally, acetylation of alpha chains at Lys-40 stabilizes microtubules and affects affinity and processivity of microtubule motors. This modification has a role in multiple cellular functions, ranging from cell motility, cell cycle progression or cell differentiation to intracellular trafficking and signaling. During the early stages of oogenesis lky/Alpha-tubulin N-acetyltransferase 2 is the main acetyltransferase responsible for Lys-40 acetylation in germline cells while Atat/alpha-tubulin N-acetyltransferase 1 is the main acetyltransferase responsible for Lys-40 acetylation in somatic cells.

It localises to the cytoplasm. The protein resides in the cytoskeleton. The enzyme catalyses GTP + H2O = GDP + phosphate + H(+). In terms of biological role, tubulin is the major constituent of microtubules, a cylinder consisting of laterally associated linear protofilaments composed of alpha- and beta-tubulin heterodimers. Microtubules grow by the addition of GTP-tubulin dimers to the microtubule end, where a stabilizing cap forms. Below the cap, tubulin dimers are in GDP-bound state, owing to GTPase activity of alpha-tubulin. This is Tubulin alpha-2 chain (alphaTub85E) from Drosophila melanogaster (Fruit fly).